We begin with the raw amino-acid sequence, 178 residues long: Fatty-acid and retinol-binding protein 1 (178 aa).

The signal sequence occupies residues Met1–Ala16. N-linked (GlcNAc...) asparagine glycosylation is found at Asn44 and Asn75. Coiled-coil stretches lie at residues Asp67–Asn89 and Gln122–Thr154. An N-linked (GlcNAc...) asparagine glycan is attached at Asn157.

The protein belongs to the fatty-acid and retinol-binding protein (FARBP) family. N-glycosylated.

The protein localises to the secreted. In terms of biological role, binds retinol and different fatty acids. This chain is Fatty-acid and retinol-binding protein 1, found in Onchocerca dukei (Filarial nematode worm).